Reading from the N-terminus, the 393-residue chain is MAQNQQPIFQTKPPEQFVQIPINIERDSSTTRMNQTGNTIRKPNHWPTITISIIFVIIGQSIAKLLENFYYDKTNRSEYNENRQNDGVWTQSLLQTVGFPLLLLPFLIFITKNKRNHHQQPPITSDSIHLKSLAVIYICIGIIMSVQGRLAAMGKLEIPFGVFTLIYTAQLFFTPIFAAFINKIKFNRWVVISVILAIITGALTLSSSFGGEPDEAEENYARGSWAALFAGICFALLLCNIQNVFDSYIFKRTESTNQKPSFASVFEVIIFSSLVATIISVVGLLIAGEQHDLKREMNGFSKGKGSYVMAMVGQAVSWQVYWVGIVGLVYSVSSVLSNVISVITWPIVSVLVVIFFNFMDDEFDAFKGVALVTAVLSAAAYFFRLHKDNRMAY.

Alanine 2 carries the post-translational modification N-acetylalanine. A run of 10 helical transmembrane segments spans residues 46-66 (WPTI…AKLL), 90-110 (TQSL…LIFI), 133-153 (LAVI…LAAM), 161-181 (GVFT…AAFI), 189-209 (WVVI…SSSF), 225-245 (WAAL…QNVF), 268-288 (VIIF…LIAG), 308-328 (VMAM…IVGL), 339-359 (VISV…FNFM), and 363-383 (FDAF…AYFF).

Belongs to the purine permeases (TC 2.A.7.14) family. As to expression, expressed in seedlings, leaves, embryos, ovules, seeds and the root and shoot meristems. In heart-stage embryos, detected in cells that failed to respond to cytokinins, including the prospective cotyledons.

Its subcellular location is the cell membrane. Its function is as follows. Purine permease implicated in ATP-dependent cytokinin translocation that controls the spatiotemporal landscape of cytokinin signaling. Depletes ligands from the apoplast, which leads to a suppression of the cytokinin response. This Arabidopsis thaliana (Mouse-ear cress) protein is Purine permease 14.